The following is a 339-amino-acid chain: Phenylalanine--tRNA ligase alpha subunit (339 aa).

Glu-254 contacts Mg(2+).

It belongs to the class-II aminoacyl-tRNA synthetase family. Phe-tRNA synthetase alpha subunit type 1 subfamily. In terms of assembly, tetramer of two alpha and two beta subunits. Mg(2+) serves as cofactor.

Its subcellular location is the cytoplasm. The enzyme catalyses tRNA(Phe) + L-phenylalanine + ATP = L-phenylalanyl-tRNA(Phe) + AMP + diphosphate + H(+). The sequence is that of Phenylalanine--tRNA ligase alpha subunit from Acetivibrio thermocellus (strain ATCC 27405 / DSM 1237 / JCM 9322 / NBRC 103400 / NCIMB 10682 / NRRL B-4536 / VPI 7372) (Clostridium thermocellum).